The primary structure comprises 443 residues: ATP-dependent protease ATPase subunit HslU (443 aa).

Residues Ile18, Gly60 to Glu65, Asp256, Glu321, and Arg393 contribute to the ATP site.

Belongs to the ClpX chaperone family. HslU subfamily. In terms of assembly, a double ring-shaped homohexamer of HslV is capped on each side by a ring-shaped HslU homohexamer. The assembly of the HslU/HslV complex is dependent on binding of ATP.

The protein resides in the cytoplasm. Functionally, ATPase subunit of a proteasome-like degradation complex; this subunit has chaperone activity. The binding of ATP and its subsequent hydrolysis by HslU are essential for unfolding of protein substrates subsequently hydrolyzed by HslV. HslU recognizes the N-terminal part of its protein substrates and unfolds these before they are guided to HslV for hydrolysis. The polypeptide is ATP-dependent protease ATPase subunit HslU (Salmonella agona (strain SL483)).